A 340-amino-acid polypeptide reads, in one-letter code: Ketol-acid reductoisomerase (NADP(+)) (340 aa).

The KARI N-terminal Rossmann domain maps to 1–182; that stretch reads MRVYYDRDCD…GGGRSGIIET (182 aa). Residues 24–27, R48, S51, S53, and 83–86 each bind NADP(+); these read YGSQ and DELQ. H108 is a catalytic residue. G134 provides a ligand contact to NADP(+). Positions 183 to 329 constitute a KARI C-terminal knotted domain; the sequence is NFREECETDL…AKLREMMPWI (147 aa). Mg(2+) contacts are provided by D191, E195, E227, and E231. S252 contributes to the substrate binding site.

Belongs to the ketol-acid reductoisomerase family. Requires Mg(2+) as cofactor.

The catalysed reaction is (2R)-2,3-dihydroxy-3-methylbutanoate + NADP(+) = (2S)-2-acetolactate + NADPH + H(+). It catalyses the reaction (2R,3R)-2,3-dihydroxy-3-methylpentanoate + NADP(+) = (S)-2-ethyl-2-hydroxy-3-oxobutanoate + NADPH + H(+). Its pathway is amino-acid biosynthesis; L-isoleucine biosynthesis; L-isoleucine from 2-oxobutanoate: step 2/4. The protein operates within amino-acid biosynthesis; L-valine biosynthesis; L-valine from pyruvate: step 2/4. Its function is as follows. Involved in the biosynthesis of branched-chain amino acids (BCAA). Catalyzes an alkyl-migration followed by a ketol-acid reduction of (S)-2-acetolactate (S2AL) to yield (R)-2,3-dihydroxy-isovalerate. In the isomerase reaction, S2AL is rearranged via a Mg-dependent methyl migration to produce 3-hydroxy-3-methyl-2-ketobutyrate (HMKB). In the reductase reaction, this 2-ketoacid undergoes a metal-dependent reduction by NADPH to yield (R)-2,3-dihydroxy-isovalerate. This Ruegeria sp. (strain TM1040) (Silicibacter sp.) protein is Ketol-acid reductoisomerase (NADP(+)).